The sequence spans 498 residues: NAD(P)H-quinone oxidoreductase subunit 2, chloroplastic (498 aa).

The next 14 helical transmembrane spans lie at 18–38 (LTIL…VIDL), 51–71 (ISMV…GFFT), 87–107 (FFLL…ILCS), 111–131 (LAEF…LSCA), 134–154 (LVTI…LSGY), 168–188 (FLLM…LLYG), 211–231 (IIYL…SLFP), 244–264 (PTPV…ALFT), 278–298 (WHVA…LIAV), 306–326 (MLAF…LSAD), 337–357 (YTFI…LFGL), 379–399 (FSLV…GFFG), 411–431 (GLYS…YYYL), and 470–490 (IAMI…DPII).

It belongs to the complex I subunit 2 family. As to quaternary structure, NDH is composed of at least 16 different subunits, 5 of which are encoded in the nucleus.

The protein localises to the plastid. It is found in the chloroplast thylakoid membrane. The enzyme catalyses a plastoquinone + NADH + (n+1) H(+)(in) = a plastoquinol + NAD(+) + n H(+)(out). The catalysed reaction is a plastoquinone + NADPH + (n+1) H(+)(in) = a plastoquinol + NADP(+) + n H(+)(out). Functionally, NDH shuttles electrons from NAD(P)H:plastoquinone, via FMN and iron-sulfur (Fe-S) centers, to quinones in the photosynthetic chain and possibly in a chloroplast respiratory chain. The immediate electron acceptor for the enzyme in this species is believed to be plastoquinone. Couples the redox reaction to proton translocation, and thus conserves the redox energy in a proton gradient. The sequence is that of NAD(P)H-quinone oxidoreductase subunit 2, chloroplastic from Adiantum capillus-veneris (Maidenhair fern).